The following is a 585-amino-acid chain: Aspartate--tRNA ligase (585 aa).

E173 contacts L-aspartate. An aspartate region spans residues 197–200 (QTLK). R219 contacts L-aspartate. ATP-binding positions include 219 to 221 (RDE) and Q228. L-aspartate is bound at residue H446. E480 contributes to the ATP binding site. R487 lines the L-aspartate pocket. Residue 532 to 535 (GLDR) coordinates ATP.

Belongs to the class-II aminoacyl-tRNA synthetase family. Type 1 subfamily. As to quaternary structure, homodimer.

Its subcellular location is the cytoplasm. The catalysed reaction is tRNA(Asp) + L-aspartate + ATP = L-aspartyl-tRNA(Asp) + AMP + diphosphate. Functionally, catalyzes the attachment of L-aspartate to tRNA(Asp) in a two-step reaction: L-aspartate is first activated by ATP to form Asp-AMP and then transferred to the acceptor end of tRNA(Asp). The polypeptide is Aspartate--tRNA ligase (Bacteroides fragilis (strain ATCC 25285 / DSM 2151 / CCUG 4856 / JCM 11019 / LMG 10263 / NCTC 9343 / Onslow / VPI 2553 / EN-2)).